Here is a 159-residue protein sequence, read N- to C-terminus: Ribosomal RNA large subunit methyltransferase H (159 aa).

S-adenosyl-L-methionine-binding positions include Leu76, Gly108, and 127-132 (FSKMTF).

The protein belongs to the RNA methyltransferase RlmH family. In terms of assembly, homodimer.

It is found in the cytoplasm. The enzyme catalyses pseudouridine(1915) in 23S rRNA + S-adenosyl-L-methionine = N(3)-methylpseudouridine(1915) in 23S rRNA + S-adenosyl-L-homocysteine + H(+). Specifically methylates the pseudouridine at position 1915 (m3Psi1915) in 23S rRNA. The sequence is that of Ribosomal RNA large subunit methyltransferase H from Clostridium kluyveri (strain NBRC 12016).